Here is a 330-residue protein sequence, read N- to C-terminus: Aspartate--ammonia ligase (330 aa).

Belongs to the class-II aminoacyl-tRNA synthetase family. AsnA subfamily.

It localises to the cytoplasm. The enzyme catalyses L-aspartate + NH4(+) + ATP = L-asparagine + AMP + diphosphate + H(+). Its pathway is amino-acid biosynthesis; L-asparagine biosynthesis; L-asparagine from L-aspartate (ammonia route): step 1/1. The protein is Aspartate--ammonia ligase of Escherichia coli O127:H6 (strain E2348/69 / EPEC).